We begin with the raw amino-acid sequence, 337 residues long: Basic membrane protein A1 (337 aa).

The signal sequence occupies residues 1–17 (MNKLLLLILFECIIFLS). C18 is lipidated: N-palmitoyl cysteine. Residue C18 is the site of S-diacylglycerol cysteine attachment.

Belongs to the BMP lipoprotein family. Monomer.

The protein resides in the cell inner membrane. In terms of biological role, immunogenic protein. May be part of an ABC-type nucleoside uptake system involved in the purine salvage pathway. This Borrelia garinii subsp. bavariensis (strain ATCC BAA-2496 / DSM 23469 / PBi) (Borreliella bavariensis) protein is Basic membrane protein A1 (bmpA1).